The following is an 85-amino-acid chain: Colicin-E6 immunity protein (85 aa).

It belongs to the cloacin immunity protein family.

Functionally, this protein inhibits the 16S RNA hydrolyzing activity of colicin E6 by binding with high affinity to the C-terminal catalytic domain of E6. This protein is able to protect a cell, which harbors the plasmid ColE6 against colicin E6. The polypeptide is Colicin-E6 immunity protein (imm) (Escherichia coli).